The primary structure comprises 149 residues: Transcriptional repressor NrdR (149 aa).

Residues 3–34 (CPFCCAVDTKVIDSRLVGEGSSVRRRRQCVVC) fold into a zinc finger. One can recognise an ATP-cone domain in the interval 49–139 (PRVVKSNDVR…VYRSFEDIRE (91 aa)).

It belongs to the NrdR family. Zn(2+) serves as cofactor.

Its function is as follows. Negatively regulates transcription of bacterial ribonucleotide reductase nrd genes and operons by binding to NrdR-boxes. This Erwinia tasmaniensis (strain DSM 17950 / CFBP 7177 / CIP 109463 / NCPPB 4357 / Et1/99) protein is Transcriptional repressor NrdR.